A 180-amino-acid chain; its full sequence is ATP synthase subunit delta (180 aa).

Belongs to the ATPase delta chain family. F-type ATPases have 2 components, F(1) - the catalytic core - and F(0) - the membrane proton channel. F(1) has five subunits: alpha(3), beta(3), gamma(1), delta(1), epsilon(1). F(0) has three main subunits: a(1), b(2) and c(10-14). The alpha and beta chains form an alternating ring which encloses part of the gamma chain. F(1) is attached to F(0) by a central stalk formed by the gamma and epsilon chains, while a peripheral stalk is formed by the delta and b chains.

The protein resides in the cell membrane. Functionally, f(1)F(0) ATP synthase produces ATP from ADP in the presence of a proton or sodium gradient. F-type ATPases consist of two structural domains, F(1) containing the extramembraneous catalytic core and F(0) containing the membrane proton channel, linked together by a central stalk and a peripheral stalk. During catalysis, ATP synthesis in the catalytic domain of F(1) is coupled via a rotary mechanism of the central stalk subunits to proton translocation. Its function is as follows. This protein is part of the stalk that links CF(0) to CF(1). It either transmits conformational changes from CF(0) to CF(1) or is implicated in proton conduction. This is ATP synthase subunit delta from Latilactobacillus sakei subsp. sakei (strain 23K) (Lactobacillus sakei subsp. sakei).